Consider the following 194-residue polypeptide: Der GTPase-activating protein YihI (194 aa).

The interval 1–87 (MSRQKKSRNI…RDPRLGSRKK (87 aa)) is disordered. Residues 37–48 (TRYELDAKARED) are compositionally biased toward basic and acidic residues.

The protein belongs to the YihI family. As to quaternary structure, interacts with Der.

Functionally, a GTPase-activating protein (GAP) that modifies Der/EngA GTPase function. May play a role in ribosome biogenesis. The polypeptide is Der GTPase-activating protein YihI (Mannheimia succiniciproducens (strain KCTC 0769BP / MBEL55E)).